A 621-amino-acid chain; its full sequence is 1-deoxy-D-xylulose-5-phosphate synthase (621 aa).

Residues His-80 and 121–123 (GHS) contribute to the thiamine diphosphate site. Position 152 (Asp-152) interacts with Mg(2+). Thiamine diphosphate is bound by residues 153–154 (GA), Asn-181, Tyr-288, and Glu-370. Asn-181 serves as a coordination point for Mg(2+).

Belongs to the transketolase family. DXPS subfamily. As to quaternary structure, homodimer. It depends on Mg(2+) as a cofactor. The cofactor is thiamine diphosphate.

The catalysed reaction is D-glyceraldehyde 3-phosphate + pyruvate + H(+) = 1-deoxy-D-xylulose 5-phosphate + CO2. It participates in metabolic intermediate biosynthesis; 1-deoxy-D-xylulose 5-phosphate biosynthesis; 1-deoxy-D-xylulose 5-phosphate from D-glyceraldehyde 3-phosphate and pyruvate: step 1/1. In terms of biological role, catalyzes the acyloin condensation reaction between C atoms 2 and 3 of pyruvate and glyceraldehyde 3-phosphate to yield 1-deoxy-D-xylulose-5-phosphate (DXP). This chain is 1-deoxy-D-xylulose-5-phosphate synthase, found in Vibrio parahaemolyticus serotype O3:K6 (strain RIMD 2210633).